The primary structure comprises 122 residues: Large ribosomal subunit protein uL14 (122 aa).

Belongs to the universal ribosomal protein uL14 family. In terms of assembly, part of the 50S ribosomal subunit. Forms a cluster with proteins L3 and L19. In the 70S ribosome, L14 and L19 interact and together make contacts with the 16S rRNA in bridges B5 and B8.

Binds to 23S rRNA. Forms part of two intersubunit bridges in the 70S ribosome. In Burkholderia lata (strain ATCC 17760 / DSM 23089 / LMG 22485 / NCIMB 9086 / R18194 / 383), this protein is Large ribosomal subunit protein uL14.